The chain runs to 134 residues: Cytochrome b5 (134 aa).

Ala-2 bears the N-acetylalanine mark. N6-acetyllysine is present on residues Lys-7, Lys-10, and Lys-19. The region spanning 9-85 (VKYYTLEEIQ…SKTFIIGELH (77 aa)) is the Cytochrome b5 heme-binding domain. Heme contacts are provided by His-44 and His-68. Residues 109 to 131 (WWTNWLIPAISALFVALIYHLYT) traverse the membrane as a helical segment.

Belongs to the cytochrome b5 family.

The protein resides in the endoplasmic reticulum membrane. Its subcellular location is the microsome membrane. Functionally, cytochrome b5 is a membrane-bound hemoprotein functioning as an electron carrier for several membrane-bound oxygenases. The protein is Cytochrome b5 (CYB5A) of Bos taurus (Bovine).